We begin with the raw amino-acid sequence, 2087 residues long: Rho GTPase-activating protein 32 (2087 aa).

The PX; atypical domain occupies 131 to 245 (GSIQLSLSEE…LTWMEIDNKG (115 aa)). The 63-residue stretch at 259–321 (PAVGAAHVIK…PGHCVELINQ (63 aa)) folds into the SH3 domain. In terms of domain architecture, Rho-GAP spans 372 to 567 (CDLGEHLLNS…FILNHVDVLF (196 aa)). A phosphoserine mark is found at Ser-706, Ser-709, Ser-732, and Ser-738. Positions 818 to 858 (FLDSPGYSKDKPSANKKDAETGSSQCQTPGSTASSEPVSPL) are disordered. Residues 825–837 (SKDKPSANKKDAE) show a composition bias toward basic and acidic residues. Residues 838-854 (TGSSQCQTPGSTASSEP) are compositionally biased toward polar residues. Residues Ser-852, Ser-856, and Ser-892 each carry the phosphoserine modification. A compositionally biased stretch (low complexity) spans 927–938 (SNTTAQNASSST). Disordered regions lie at residues 927 to 1038 (SNTT…PPKN), 1103 to 1143 (PAEQ…EQHH), and 1169 to 1257 (VPLD…ENTS). The residue at position 952 (Ser-952) is a Phosphoserine. 2 stretches are compositionally biased toward low complexity: residues 994–1005 (SVSSSQSKAVAS) and 1019–1029 (QDSVPVSSVSL). The segment covering 1124–1138 (TTATGDPTHSNTTES) has biased composition (polar residues). The span at 1172-1182 (DSEKSDDHVSF) shows a compositional bias: basic and acidic residues. Residues 1188–1203 (GKNSMPTVSFLDQDQS) are compositionally biased toward polar residues. Ser-1203 is subject to Phosphoserine. Residues 1222–1232 (DKLHHPLEFAD) are compositionally biased toward basic and acidic residues. Positions 1391–1711 (RVPLLHLRAE…YSYAGLAPRP (321 aa)) are interaction with GAB2. Asymmetric dimethylarginine is present on residues Arg-1523 and Arg-1533. Ser-1585 carries the post-translational modification Phosphoserine. Residues 1685-2087 (PNRDFAFYNP…QHPETQIHAE (403 aa)) form an interaction with FYN region. The segment at 1798–1896 (PGKTGLLSVA…QFCESKNGPP (99 aa)) is disordered. Residues 1823–1838 (GEDRFYRRHPEAEMDR) are compositionally biased toward basic and acidic residues. Residues 1847-1862 (STQPEKPSLPQKQSSL) are compositionally biased toward polar residues. Positions 1875–1889 (PEHRAHQEASHRQFC) are enriched in basic and acidic residues. Position 2037 is an omega-N-methylarginine (Arg-2037).

This sequence belongs to the PX domain-containing GAP family. Interacts with NTRK1 (via cytoplasmic domain); the interaction is independent of the phosphorylation state of NTRK1. Interacts with SHC3 (via SH2 domain). Interacts with RASA1 (via SH3 domain); the interaction is necessary for the Ras activation and cell transforming activities of ARHGAP32. Interacts with GAB1 and GAB2. Interacts with CRK and CRKL. Found in a complex with CRKL and BCAR1; upon EGF stimulation BCAR1 may be replaced by EGFR. Interacts with NCK1 (via SH3 domain); NCK1 recruits phosphorylated BCAR1 to the complex. Isoform 2 interacts with FYN; the interaction appears to be dependent on tyrosine phosphorylation of ARHGAP32. Interacts with EGFR; the interaction requires EGF stimulation and is increased by SHC3. Interacts with CDC42; the interaction requires constitutively active CDC42. Interacts with CTNNB1. Interacts with GRIN2B. Interacts with DLG4 and CDH2. Interacts with GPHN. In terms of processing, isoform 2 is phosphorylated on multiple tyrosine residues by FYN. Phosphorylated tyrosine residues undergo dephosphorylation after stimulation of NMDA receptors. Phosphorylated in vitro by CaMK2 in the presence of calmodulin and calcium; which inhibits GAP activity. In terms of tissue distribution, isoform 1 and isoform 2 are highly expressed in brain and testis. Isoform 1 is also expressed in other tissues such as lung, liver and spleen.

The protein resides in the postsynaptic density. It localises to the cell projection. It is found in the dendritic spine. The protein localises to the cytoplasm. Its subcellular location is the cell cortex. The protein resides in the endosome membrane. It localises to the golgi apparatus membrane. It is found in the endoplasmic reticulum membrane. The protein localises to the membrane. Its function is as follows. GTPase-activating protein (GAP) promoting GTP hydrolysis on RHOA, CDC42 and RAC1 small GTPases. May be involved in the differentiation of neuronal cells during the formation of neurite extensions. Involved in NMDA receptor activity-dependent actin reorganization in dendritic spines. May mediate cross-talks between Ras- and Rho-regulated signaling pathways in cell growth regulation. Isoform 2 has higher GAP activity. This Homo sapiens (Human) protein is Rho GTPase-activating protein 32 (ARHGAP32).